The chain runs to 637 residues: Threonine--tRNA ligase (637 aa).

The TGS domain maps to 1–61 (MPVITLPDGS…DKDAELAIVT (61 aa)). The catalytic stretch occupies residues 242–533 (DHRKIGKKLG…LIEHYEGAFP (292 aa)). Zn(2+)-binding residues include Cys-333, His-384, and His-510.

The protein belongs to the class-II aminoacyl-tRNA synthetase family. As to quaternary structure, homodimer. It depends on Zn(2+) as a cofactor.

The protein localises to the cytoplasm. It carries out the reaction tRNA(Thr) + L-threonine + ATP = L-threonyl-tRNA(Thr) + AMP + diphosphate + H(+). Functionally, catalyzes the attachment of threonine to tRNA(Thr) in a two-step reaction: L-threonine is first activated by ATP to form Thr-AMP and then transferred to the acceptor end of tRNA(Thr). Also edits incorrectly charged L-seryl-tRNA(Thr). The chain is Threonine--tRNA ligase from Hahella chejuensis (strain KCTC 2396).